Reading from the N-terminus, the 592-residue chain is V-type ATP synthase alpha chain (592 aa).

233 to 240 (GPFGSGKT) contacts ATP.

It belongs to the ATPase alpha/beta chains family.

The enzyme catalyses ATP + H2O + 4 H(+)(in) = ADP + phosphate + 5 H(+)(out). In terms of biological role, produces ATP from ADP in the presence of a proton gradient across the membrane. The V-type alpha chain is a catalytic subunit. The sequence is that of V-type ATP synthase alpha chain from Clostridium botulinum (strain Okra / Type B1).